An 81-amino-acid polypeptide reads, in one-letter code: Photosystem I iron-sulfur center (81 aa).

4Fe-4S ferredoxin-type domains follow at residues 2–31 and 39–68; these read AHSVKVYDTCIGCTQCVRACPCDVLEMVPW and IASAPRTEDCIGCKRCETACPTDFLSVRVY. [4Fe-4S] cluster is bound by residues cysteine 11, cysteine 14, cysteine 17, cysteine 21, cysteine 48, cysteine 51, cysteine 54, and cysteine 58.

As to quaternary structure, the eukaryotic PSI reaction center is composed of at least 11 subunits. The cofactor is [4Fe-4S] cluster.

The protein resides in the plastid. It localises to the chloroplast thylakoid membrane. The enzyme catalyses reduced [plastocyanin] + hnu + oxidized [2Fe-2S]-[ferredoxin] = oxidized [plastocyanin] + reduced [2Fe-2S]-[ferredoxin]. In terms of biological role, apoprotein for the two 4Fe-4S centers FA and FB of photosystem I (PSI); essential for photochemical activity. FB is the terminal electron acceptor of PSI, donating electrons to ferredoxin. The C-terminus interacts with PsaA/B/D and helps assemble the protein into the PSI complex. Required for binding of PsaD and PsaE to PSI. PSI is a plastocyanin/cytochrome c6-ferredoxin oxidoreductase, converting photonic excitation into a charge separation, which transfers an electron from the donor P700 chlorophyll pair to the spectroscopically characterized acceptors A0, A1, FX, FA and FB in turn. This is Photosystem I iron-sulfur center from Gracilaria tenuistipitata var. liui (Red alga).